The following is a 224-amino-acid chain: Oxaloacetate tautomerase FAHD2, mitochondrial (224 aa).

The N-terminal 30 residues, methionine 1–leucine 30, are a transit peptide targeting the mitochondrion. The Mg(2+) site is built by glutamate 67, glutamate 69, and aspartate 98.

Belongs to the FAH family. Mg(2+) serves as cofactor. It depends on Mn(2+) as a cofactor.

The protein resides in the mitochondrion. It catalyses the reaction oxaloacetate = enol-oxaloacetate. Tautomerase that converts enol-oxaloacetate, a strong inhibitor of succinate dehydrogenase, to the physiological keto form of oxaloacetate. This chain is Oxaloacetate tautomerase FAHD2, mitochondrial, found in Arabidopsis thaliana (Mouse-ear cress).